We begin with the raw amino-acid sequence, 120 residues long: Small ribosomal subunit protein eS17 (120 aa).

This sequence belongs to the eukaryotic ribosomal protein eS17 family. As to quaternary structure, component of the small ribosomal subunit.

The protein resides in the cytoplasm. This chain is Small ribosomal subunit protein eS17 (RPS17), found in Encephalitozoon cuniculi (strain GB-M1) (Microsporidian parasite).